Consider the following 477-residue polypeptide: Probable periplasmic serine endoprotease DegP-like (477 aa).

The N-terminal stretch at 1-27 is a signal peptide; the sequence is MSIPRLKSYLTMFAAVLMLGQVLTAQA. Catalysis depends on charge relay system residues histidine 117, aspartate 147, and serine 220. Substrate contacts are provided by residues 218–220 and 275–279; these read GNS and LGVVI. 2 PDZ domains span residues 264–355 and 361–466; these read LKKD…IRNG and DISV…LRQG.

The protein belongs to the peptidase S1C family.

The protein localises to the periplasm. It catalyses the reaction Acts on substrates that are at least partially unfolded. The cleavage site P1 residue is normally between a pair of hydrophobic residues, such as Val-|-Val.. Its function is as follows. Might be efficient in the degradation of transiently denatured and unfolded proteins which accumulate in the periplasm following stress conditions. The sequence is that of Probable periplasmic serine endoprotease DegP-like from Pseudomonas putida (strain GB-1).